Reading from the N-terminus, the 198-residue chain is MISLFISNFSNLSNLSPTFDNMNMNIPSKKIVPVPTPSEKVVSLVSRTGRDLQRYNTAGYRQVVGCVPYRYKKHGGGEIEVLLISAQKKGKGMLLPKGGWEIDESIEEAALRETIEEAGVTGQLEESLGKWQYKSKRHTMIHDGHMFPLLVSQQFEIWPESEFRQRKWVSLSEAIELCQNSWMREALEAFINRKCQTQ.

A chloroplast-targeting transit peptide spans 1-37 (MISLFISNFSNLSNLSPTFDNMNMNIPSKKIVPVPTP). A Nudix hydrolase domain is found at 59 to 191 (GYRQVVGCVP…WMREALEAFI (133 aa)). The Nudix box signature appears at 98–119 (GGWEIDESIEEAALRETIEEAG). Residues Glu-113 and Glu-117 each contribute to the Mg(2+) site.

It belongs to the Nudix hydrolase family. Mg(2+) serves as cofactor. Mn(2+) is required as a cofactor. In terms of tissue distribution, expressed in roots, leaves, stems and inflorescences.

The protein resides in the plastid. Its subcellular location is the chloroplast. Its function is as follows. Probably mediates the hydrolysis of some nucleoside diphosphate derivatives. The polypeptide is Nudix hydrolase 21, chloroplastic (NUDT21) (Arabidopsis thaliana (Mouse-ear cress)).